The chain runs to 387 residues: Apoptosis-inducing factor homolog B (387 aa).

FAD-binding positions include 12 to 16 (GGGYG), arginine 47, and aspartate 292.

The protein belongs to the FAD-dependent oxidoreductase family. The cofactor is FAD.

In terms of biological role, putative FAD-dependent oxidoreductase. This Dictyostelium discoideum (Social amoeba) protein is Apoptosis-inducing factor homolog B (aifB).